A 354-amino-acid polypeptide reads, in one-letter code: Serum paraoxonase/arylesterase 2 (354 aa).

Residue N29 is glycosylated (N-linked (GlcNAc...) asparagine). A disulfide bridge connects residues C42 and C352. Residues E53 and D54 each coordinate Ca(2+). H114 (proton acceptor) is an active-site residue. Residues I116, N167, D168, and N223 each coordinate Ca(2+). N254 carries N-linked (GlcNAc...) asparagine glycosylation. Residues D268 and N269 each contribute to the Ca(2+) site. N269 and N323 each carry an N-linked (GlcNAc...) asparagine glycan.

Belongs to the paraoxonase family. Ca(2+) serves as cofactor. Glycosylated. Post-translationally, the signal sequence is not cleaved.

The protein localises to the membrane. It carries out the reaction a phenyl acetate + H2O = a phenol + acetate + H(+). The catalysed reaction is An aryl dialkyl phosphate + H2O = dialkyl phosphate + an aryl alcohol.. The absence of paraoxonase activity in turkey and chicken blood and in turkey liver indicates that PON2, if expressed, does not hydrolyze paraoxon. The polypeptide is Serum paraoxonase/arylesterase 2 (PON2) (Gallus gallus (Chicken)).